The following is an 832-amino-acid chain: Leucine--tRNA ligase (832 aa).

The 'HIGH' region motif lies at 58 to 68 (PYPSGDLHMGH). Positions 598-602 (AMSKS) match the 'KMSKS' region motif. Residue Lys601 coordinates ATP.

The protein belongs to the class-I aminoacyl-tRNA synthetase family.

The protein localises to the cytoplasm. It carries out the reaction tRNA(Leu) + L-leucine + ATP = L-leucyl-tRNA(Leu) + AMP + diphosphate. This Acidothermus cellulolyticus (strain ATCC 43068 / DSM 8971 / 11B) protein is Leucine--tRNA ligase.